The sequence spans 250 residues: Small ribosomal subunit protein uS3 (250 aa).

A KH type-2 domain is found at 39-107; that stretch reads VREFLTKKLK…PAQVSINEID (69 aa). Residues 215–250 form a disordered region; the sequence is MNPAPAEERPAKRGRGRGEGQERRGRRGDRAADKGE. Over residues 220 to 250 the composition is skewed to basic and acidic residues; sequence AEERPAKRGRGRGEGQERRGRRGDRAADKGE.

The protein belongs to the universal ribosomal protein uS3 family. Part of the 30S ribosomal subunit. Forms a tight complex with proteins S10 and S14.

Functionally, binds the lower part of the 30S subunit head. Binds mRNA in the 70S ribosome, positioning it for translation. The polypeptide is Small ribosomal subunit protein uS3 (Acinetobacter baumannii (strain AB307-0294)).